A 182-amino-acid chain; its full sequence is Inosine/xanthosine triphosphatase (182 aa).

This sequence belongs to the YjjX NTPase family. In terms of assembly, homodimer. Mg(2+) is required as a cofactor. The cofactor is Mn(2+).

The enzyme catalyses XTP + H2O = XDP + phosphate + H(+). It carries out the reaction ITP + H2O = IDP + phosphate + H(+). In terms of biological role, phosphatase that hydrolyzes non-canonical purine nucleotides such as XTP and ITP to their respective diphosphate derivatives. Probably excludes non-canonical purines from DNA/RNA precursor pool, thus preventing their incorporation into DNA/RNA and avoiding chromosomal lesions. In Vibrio parahaemolyticus serotype O3:K6 (strain RIMD 2210633), this protein is Inosine/xanthosine triphosphatase.